We begin with the raw amino-acid sequence, 207 residues long: Ribosomal RNA small subunit methyltransferase G (207 aa).

S-adenosyl-L-methionine is bound by residues Gly76, Gln81, 127-128, and Arg141; that span reads VE.

It belongs to the methyltransferase superfamily. RNA methyltransferase RsmG family.

The protein resides in the cytoplasm. The catalysed reaction is guanosine(527) in 16S rRNA + S-adenosyl-L-methionine = N(7)-methylguanosine(527) in 16S rRNA + S-adenosyl-L-homocysteine. Functionally, specifically methylates the N7 position of guanine in position 527 of 16S rRNA. The chain is Ribosomal RNA small subunit methyltransferase G from Neisseria meningitidis serogroup B (strain ATCC BAA-335 / MC58).